The primary structure comprises 196 residues: Orotate phosphoribosyltransferase (196 aa).

5-phospho-alpha-D-ribose 1-diphosphate contacts are provided by residues arginine 102, lysine 103, lysine 106, histidine 108, and 129–137; that span reads EDVVTTGGS. Residues threonine 133 and arginine 161 each contribute to the orotate site.

Belongs to the purine/pyrimidine phosphoribosyltransferase family. PyrE subfamily. Homodimer. Requires Mg(2+) as cofactor.

It carries out the reaction orotidine 5'-phosphate + diphosphate = orotate + 5-phospho-alpha-D-ribose 1-diphosphate. It functions in the pathway pyrimidine metabolism; UMP biosynthesis via de novo pathway; UMP from orotate: step 1/2. In terms of biological role, catalyzes the transfer of a ribosyl phosphate group from 5-phosphoribose 1-diphosphate to orotate, leading to the formation of orotidine monophosphate (OMP). The polypeptide is Orotate phosphoribosyltransferase (Prochlorococcus marinus (strain MIT 9303)).